A 418-amino-acid polypeptide reads, in one-letter code: Putative ion-transport protein YfeO (418 aa).

Helical transmembrane passes span 15–37 (PAVA…ASVL), 57–79 (LWII…FSQG), 99–118 (ALPR…VSLG), 149–171 (ILAS…LIFS), 186–208 (LFAP…HPHF), 221–243 (TDIL…AVWC), 258–280 (VLVL…PVSL), 301–323 (YFLL…FRGG), 343–363 (VPAV…VLVV), and 376–398 (VVVP…WLLL).

It belongs to the chloride channel (TC 2.A.49) family.

It is found in the cell membrane. The protein is Putative ion-transport protein YfeO (yfeO) of Shigella flexneri.